Here is a 327-residue protein sequence, read N- to C-terminus: BarH-like 1 homeobox protein (327 aa).

Disordered stretches follow at residues 1–90 (MEGS…AQSR), 112–184 (APYS…ARTA), and 305–327 (GASE…AQPR). Residues 33–54 (RSPLELSPRSESSSDCSSPASP) show a composition bias toward low complexity. Residues 79 to 90 (QPGQLSAPAQSR) show a composition bias toward polar residues. Composition is skewed to basic and acidic residues over residues 133 to 143 (AAEDFRDKLDK) and 152 to 166 (SEYK…EISS). The segment at residues 178 to 237 (PRKARTAFTDHQLAQLERSFERQKYLSVQDRMELAASLNLTDTQVKTWYQNRRTKWKRQT) is a DNA-binding region (homeobox). The segment covering 316-327 (LAGVLPRAAQPR) has biased composition (low complexity).

Belongs to the BAR homeobox family.

The protein localises to the nucleus. In Homo sapiens (Human), this protein is BarH-like 1 homeobox protein (BARHL1).